Here is a 375-residue protein sequence, read N- to C-terminus: DNA replication and repair protein RecF (375 aa).

G34 to T41 contributes to the ATP binding site.

The protein belongs to the RecF family.

The protein localises to the cytoplasm. Functionally, the RecF protein is involved in DNA metabolism; it is required for DNA replication and normal SOS inducibility. RecF binds preferentially to single-stranded, linear DNA. It also seems to bind ATP. The sequence is that of DNA replication and repair protein RecF from Rhizobium rhizogenes (strain K84 / ATCC BAA-868) (Agrobacterium radiobacter).